A 579-amino-acid polypeptide reads, in one-letter code: Arginine--tRNA ligase (579 aa).

Residues 127 to 137 carry the 'HIGH' region motif; the sequence is ANPTGPLHVGH.

Belongs to the class-I aminoacyl-tRNA synthetase family. As to quaternary structure, monomer.

It localises to the cytoplasm. The catalysed reaction is tRNA(Arg) + L-arginine + ATP = L-arginyl-tRNA(Arg) + AMP + diphosphate. This is Arginine--tRNA ligase from Acidithiobacillus ferrooxidans (strain ATCC 23270 / DSM 14882 / CIP 104768 / NCIMB 8455) (Ferrobacillus ferrooxidans (strain ATCC 23270)).